We begin with the raw amino-acid sequence, 61 residues long: Large ribosomal subunit protein uL30 (61 aa).

Belongs to the universal ribosomal protein uL30 family. As to quaternary structure, part of the 50S ribosomal subunit.

The polypeptide is Large ribosomal subunit protein uL30 (Treponema denticola (strain ATCC 35405 / DSM 14222 / CIP 103919 / JCM 8153 / KCTC 15104)).